Here is a 136-residue protein sequence, read N- to C-terminus: Histone H3-like 3 (136 aa).

Basic residues predominate over residues 1 to 15; it reads MARTKQTARKSHGGK. The tract at residues 1–42 is disordered; the sequence is MARTKQTARKSHGGKAPRTLLATKAARKSAPTTGGVKKPHRY. 2 positions are modified to N6,N6,N6-trimethyllysine; alternate: lysine 5 and lysine 10. N6,N6-dimethyllysine; alternate is present on residues lysine 5 and lysine 10. Lysine 5 and lysine 10 each carry N6-methyllysine; alternate. An N6-acetyllysine; alternate modification is found at lysine 10. Serine 11 carries the phosphoserine modification. Lysine 15 is modified (N6-acetyllysine). N6-methyllysine; alternate is present on residues lysine 24 and lysine 28. Lysine 24 bears the N6-acetyllysine; alternate mark. The residue at position 28 (lysine 28) is an N6,N6,N6-trimethyllysine; alternate. N6,N6-dimethyllysine; alternate is present on lysine 28. Position 29 is a phosphoserine (serine 29). Lysine 37 is modified (N6,N6,N6-trimethyllysine; alternate). At lysine 37 the chain carries N6,N6-dimethyllysine; alternate. N6-methyllysine; alternate is present on lysine 37.

The protein belongs to the histone H3 family. The nucleosome is a histone octamer containing two molecules each of H2A, H2B, H3 and H4 assembled in one H3-H4 heterotetramer and two H2A-H2B heterodimers. The octamer wraps approximately 147 bp of DNA. In terms of tissue distribution, expressed in roots, seedlings, leaves and open flowers.

The protein localises to the nucleus. Its subcellular location is the chromosome. Functionally, core component of nucleosome. Nucleosomes wrap and compact DNA into chromatin, limiting DNA accessibility to the cellular machineries which require DNA as a template. Histones thereby play a central role in transcription regulation, DNA repair, DNA replication and chromosomal stability. DNA accessibility is regulated via a complex set of post-translational modifications of histones, also called histone code, and nucleosome remodeling. This is Histone H3-like 3 from Arabidopsis thaliana (Mouse-ear cress).